A 475-amino-acid polypeptide reads, in one-letter code: Aspartyl/glutamyl-tRNA(Asn/Gln) amidotransferase subunit B (475 aa).

The protein belongs to the GatB/GatE family. GatB subfamily. As to quaternary structure, heterotrimer of A, B and C subunits.

The catalysed reaction is L-glutamyl-tRNA(Gln) + L-glutamine + ATP + H2O = L-glutaminyl-tRNA(Gln) + L-glutamate + ADP + phosphate + H(+). It carries out the reaction L-aspartyl-tRNA(Asn) + L-glutamine + ATP + H2O = L-asparaginyl-tRNA(Asn) + L-glutamate + ADP + phosphate + 2 H(+). In terms of biological role, allows the formation of correctly charged Asn-tRNA(Asn) or Gln-tRNA(Gln) through the transamidation of misacylated Asp-tRNA(Asn) or Glu-tRNA(Gln) in organisms which lack either or both of asparaginyl-tRNA or glutaminyl-tRNA synthetases. The reaction takes place in the presence of glutamine and ATP through an activated phospho-Asp-tRNA(Asn) or phospho-Glu-tRNA(Gln). In Chlorobium phaeobacteroides (strain BS1), this protein is Aspartyl/glutamyl-tRNA(Asn/Gln) amidotransferase subunit B.